Reading from the N-terminus, the 572-residue chain is Pentatricopeptide repeat-containing protein At5g15010, mitochondrial (572 aa).

Residues 1 to 57 (MRGIFLIRSRLSIFRAPAVKCLRFSNVLPSLSNNCIVRLYMEPPVACVLPLGLCSMF) constitute a mitochondrion transit peptide. PPR repeat units follow at residues 160 to 194 (SVRE…SPSL), 196 to 230 (NSQT…KLEM), 231 to 261 (GIDD…NKDK), 265 to 300 (DAKS…GVKH), 301 to 335 (DVVS…CIEP), 336 to 371 (DRKV…GIEP), 372 to 406 (NVVT…GLFP), 412 to 438 (HAFM…GCEP), 439 to 473 (TVET…TVGP), and 474 to 508 (DLSS…GMRP).

Belongs to the PPR family. P subfamily.

The protein localises to the mitochondrion. The protein is Pentatricopeptide repeat-containing protein At5g15010, mitochondrial of Arabidopsis thaliana (Mouse-ear cress).